The following is a 555-amino-acid chain: MKSDIEIARSVELKKIKQVAESIGIPREEVENYGRYIAKIPEQLIDEEKVKKSNLVLVTAITATKAGIGKTTVSIGLALGLNKIGKKAIVALREPSLGPCFGMKGGAAGGGYAQVLPMEKINLHFTGDFHAITSAHNMISALLDNYLYQNQAKGFGLKEILWRRVLDVNDRSLRSIVVGLGPKSNGITQESGFDITPASEIMAILCLSKDVEDLRRRIENILLGFTYDDQPFTVKDLGVAGAITVLLKDAIHPNLVQTTEGTAAFVHGGPFANIAHGCNSILATKLAMSFGDYVITEAGFGADLGAEKFYNIKCRKSGLQPKLTVIVATAQGLKMHGGVSLDRIKEPNMEGLKEGLRNLDKHIRNLRSFGQTVVVAFNKFATDTDEEMEMLREHCEQLGVGYAINNAFSDGGDGAVDMARLVVDTIENNPSEPLRYTYKEEDSIQQKIEKVATNLYGASVITYSSIARNRIKLIEKMGITHYPVCIAKTQYSFSADPKIYGAVNNFEFHIKDIVINNGAEMIVAIAGEILRMPGLPKEPQALHIDIVDGEIEGLS.

ATP is bound at residue 64–71 (TKAGIGKT).

It belongs to the formate--tetrahydrofolate ligase family.

The catalysed reaction is (6S)-5,6,7,8-tetrahydrofolate + formate + ATP = (6R)-10-formyltetrahydrofolate + ADP + phosphate. It functions in the pathway one-carbon metabolism; tetrahydrofolate interconversion. The sequence is that of Formate--tetrahydrofolate ligase from Bacteroides thetaiotaomicron (strain ATCC 29148 / DSM 2079 / JCM 5827 / CCUG 10774 / NCTC 10582 / VPI-5482 / E50).